A 37-amino-acid chain; its full sequence is MTTLNNLPSILVTLVGLVFPAFAMASLFLHVQKNKIL.

The helical transmembrane segment at 9-29 (SILVTLVGLVFPAFAMASLFL) threads the bilayer.

It belongs to the PsaI family.

It localises to the plastid. The protein localises to the chloroplast thylakoid membrane. Functionally, may help in the organization of the PsaL subunit. This is Photosystem I reaction center subunit VIII from Pelargonium hortorum (Common geranium).